The primary structure comprises 574 residues: ESX-1 secretion system protein EccA1 (574 aa).

Residue 335–342 (GPPGTGKT) coordinates ATP.

This sequence belongs to the CbxX/CfxQ family. As to quaternary structure, part of the ESX-1 / type VII secretion system (T7SS), which is composed of cytosolic and membrane components.

Its subcellular location is the cytoplasm. Its function is as follows. Part of the ESX-1 / type VII specialized secretion system (T7SS), which exports several proteins including EsxA and EsxB. Plays a role in DNA conjugation, in both donor and recipient strains. EccA1 exhibits ATPase activity and may provide energy for the export of ESX-1 substrates. This Mycolicibacterium smegmatis (strain ATCC 700084 / mc(2)155) (Mycobacterium smegmatis) protein is ESX-1 secretion system protein EccA1.